Reading from the N-terminus, the 224-residue chain is uncharacterized protein (224 aa).

Residues 1-16 (MKILYSFLLLPFFSCA) form the signal peptide.

This is an uncharacterized protein from Escherichia coli.